Here is a 357-residue protein sequence, read N- to C-terminus: UPF0283 membrane protein BMEI0952 (357 aa).

The disordered stretch occupies residues 1–36 (MSDKTPRKPTAFRLEQPARVSAASEQEEPRRPRAVK). The span at 27–36 (EEPRRPRAVK) shows a compositional bias: basic and acidic residues. Helical transmembrane passes span 78 to 98 (ILFGALGILVSFAIGIWTEDL) and 109 to 129 (LGWTALGVAMVALAAFAAIIL).

The protein belongs to the UPF0283 family.

The protein localises to the cell inner membrane. This chain is UPF0283 membrane protein BMEI0952, found in Brucella melitensis biotype 1 (strain ATCC 23456 / CCUG 17765 / NCTC 10094 / 16M).